The following is a 504-amino-acid chain: Maturase K (504 aa).

The protein belongs to the intron maturase 2 family. MatK subfamily.

Its subcellular location is the plastid. It is found in the chloroplast. Its function is as follows. Usually encoded in the trnK tRNA gene intron. Probably assists in splicing its own and other chloroplast group II introns. The sequence is that of Maturase K from Adenostoma fasciculatum (Chamise).